Consider the following 205-residue polypeptide: Tumor suppressor candidate gene 1 protein homolog (205 aa).

Positions 1–12 (MWRMRGGATRRG) are enriched in low complexity. The tract at residues 1-49 (MWRMRGGATRRGSCGGEGGGSRGESGRLGRAREGGGGGGGVGWRGRAGG) is disordered. Gly residues predominate over residues 13–23 (SCGGEGGGSRG). A compositionally biased stretch (basic and acidic residues) spans 24 to 33 (ESGRLGRARE). Residues 34–48 (GGGGGGGVGWRGRAG) are compositionally biased toward gly residues. Residues 66 to 110 (LEALRARDERDRQNARLREENARLRLENRRLRRENRSLFRQALRL) are a coiled coil. Disordered regions lie at residues 113–149 (DSGEREAAVETLAPDEPATNRKARGHGREEEPGSPRA) and 174–205 (GARPPGAIEEPPLQETATGLCAHDPDVPRPWL). Residue serine 146 is modified to Phosphoserine. Residues 196–205 (HDPDVPRPWL) show a composition bias toward basic and acidic residues.

The protein is Tumor suppressor candidate gene 1 protein homolog (Tusc1) of Mus musculus (Mouse).